The sequence spans 506 residues: NAD(P)H-quinone oxidoreductase subunit 2 (506 aa).

14 helical membrane-spanning segments follow: residues 14–34 (AIIPEAFILLGIVGTLLVDLA), 42–62 (WAPVICYISLGSSLISLALQW), 79–99 (LAIAFRSIIALSTLISLLISW), 108–128 (PIGEFAAIVLSATLGAMLLCG), 132–152 (LVSVFISLETLSVASYCLSGY), 167–187 (LLVGSAAAAVYLYGSSFLYGL), 206–226 (FITSLSLVFVLSTVAFKIAAV), 240–260 (PTPVVAFLSVGSKTAGFAFAI), 276–296 (LLFTILAILSMALGNIVALAQ), 302–322 (MLAYSSIGQAGFVMIGIVSGT), 330–350 (VLYLAAYLFMNLGAFSCVILF), 374–394 (LGLSLCLLSLGGLPPMLGFFG), 409–429 (LLVVVGLITSVISIYYYISVI), and 462–482 (IALYTCIAVTALGGILSNPLF).

The protein belongs to the complex I subunit 2 family. As to quaternary structure, NDH-1 can be composed of about 15 different subunits; different subcomplexes with different compositions have been identified which probably have different functions.

It localises to the cellular thylakoid membrane. It carries out the reaction a plastoquinone + NADH + (n+1) H(+)(in) = a plastoquinol + NAD(+) + n H(+)(out). The enzyme catalyses a plastoquinone + NADPH + (n+1) H(+)(in) = a plastoquinol + NADP(+) + n H(+)(out). In terms of biological role, NDH-1 shuttles electrons from an unknown electron donor, via FMN and iron-sulfur (Fe-S) centers, to quinones in the respiratory and/or the photosynthetic chain. The immediate electron acceptor for the enzyme in this species is believed to be plastoquinone. Couples the redox reaction to proton translocation, and thus conserves the redox energy in a proton gradient. Cyanobacterial NDH-1 also plays a role in inorganic carbon-concentration. The chain is NAD(P)H-quinone oxidoreductase subunit 2 from Prochlorococcus marinus subsp. pastoris (strain CCMP1986 / NIES-2087 / MED4).